Reading from the N-terminus, the 319-residue chain is MAAMRRGVILGGVAAGPEGPLVTAARTGRTAVRARAVIRVESAPDGTARLIELRSDVPIVLRQTGASPGRTRAPSTVPALSADALPTATVHLVNATAGPLAGDDLGLDISVGSGVRLVVRSVAATVALPGHGPGPSRFTVSARVAPGGALDFAPEPTVAARGSDHLLVTDVHLATTAWLRLREEIVLGRFGETTGSIRSTLRVDMDAHAEVDPPSEPTPLLRQDLVLGPEIPGLTGPALLGSARALGSLLVAGPDPVGSPAARRESVPAKRAESGAQAAVADGVALLPLAGPGYLISALAENAVTLRRRLEQGPAPATV.

The segment at 254-273 is disordered; the sequence is PDPVGSPAARRESVPAKRAE. Basic and acidic residues predominate over residues 262–273; sequence ARRESVPAKRAE.

This sequence belongs to the UreD family. In terms of assembly, ureD, UreF and UreG form a complex that acts as a GTP-hydrolysis-dependent molecular chaperone, activating the urease apoprotein by helping to assemble the nickel containing metallocenter of UreC. The UreE protein probably delivers the nickel.

Its subcellular location is the cytoplasm. In terms of biological role, required for maturation of urease via the functional incorporation of the urease nickel metallocenter. This is Urease accessory protein UreD from Frankia casuarinae (strain DSM 45818 / CECT 9043 / HFP020203 / CcI3).